A 56-amino-acid chain; its full sequence is MKQAYYSCEEHIETVLDMYIDDHELPPEIRKIEHTNSLSTACELCGDPAVYIVGNE.

This is an uncharacterized protein from Bacillus subtilis (strain 168).